The chain runs to 203 residues: Guanylate kinase (203 aa).

Residues 4–183 (GKLFVISAPS…ASTLLKSIIW (180 aa)) form the Guanylate kinase-like domain. Residue 11 to 18 (APSGAGKT) participates in ATP binding.

The protein belongs to the guanylate kinase family.

Its subcellular location is the cytoplasm. The catalysed reaction is GMP + ATP = GDP + ADP. In terms of biological role, essential for recycling GMP and indirectly, cGMP. This is Guanylate kinase from Desulfotalea psychrophila (strain LSv54 / DSM 12343).